Here is a 255-residue protein sequence, read N- to C-terminus: Menaquinol:cytochrome c reductase cytochrome c subunit (255 aa).

The next 3 membrane-spanning stretches (helical) occupy residues 46-62, 104-124, and 137-157; these read WMVG…LTIV, VVGA…APFL, and VAVG…WQSV. A Cytochrome c domain is found at 178–253; the sequence is DTNAEGYKVF…ELAKFISETT (76 aa). Residues C192, C195, and H196 each contribute to the heme c site.

This sequence belongs to the cytochrome b family. The main subunits of the menaquinol:cytochrome c complex are a Rieske-type iron-sulfur protein (QcrA), a cytochrome b (QcrB) and a cytochrome c (QcrC). It depends on heme c as a cofactor.

Its subcellular location is the cell membrane. Component of the menaquinol:cytochrome c reductase complex. In Bacillus subtilis (strain 168), this protein is Menaquinol:cytochrome c reductase cytochrome c subunit (qcrC).